Here is a 284-residue protein sequence, read N- to C-terminus: Phosphatidylglycerol--prolipoprotein diacylglyceryl transferase (284 aa).

7 consecutive transmembrane segments (helical) span residues 19 to 39 (ISFY…MWFL), 60 to 80 (LLYL…VLFY), 98 to 118 (GGMS…WFSY), 130 to 150 (FIVP…FING), 199 to 219 (QLYE…IFSC), 225 to 245 (GSIS…IEFF), and 258 to 278 (FITL…IIMY). Position 143 (Arg-143) interacts with a 1,2-diacyl-sn-glycero-3-phospho-(1'-sn-glycerol).

It belongs to the Lgt family.

It localises to the cell inner membrane. The enzyme catalyses L-cysteinyl-[prolipoprotein] + a 1,2-diacyl-sn-glycero-3-phospho-(1'-sn-glycerol) = an S-1,2-diacyl-sn-glyceryl-L-cysteinyl-[prolipoprotein] + sn-glycerol 1-phosphate + H(+). It functions in the pathway protein modification; lipoprotein biosynthesis (diacylglyceryl transfer). Functionally, catalyzes the transfer of the diacylglyceryl group from phosphatidylglycerol to the sulfhydryl group of the N-terminal cysteine of a prolipoprotein, the first step in the formation of mature lipoproteins. The chain is Phosphatidylglycerol--prolipoprotein diacylglyceryl transferase from Blochmanniella floridana.